We begin with the raw amino-acid sequence, 130 residues long: Methylglyoxal synthase (130 aa).

In terms of domain architecture, MGS-like spans methionine 1–cysteine 130. Residues histidine 11, lysine 15, threonine 37–threonine 40, and serine 57–glycine 58 each bind substrate. Residue aspartate 63 is the Proton donor/acceptor of the active site. Residue histidine 90 coordinates substrate.

This sequence belongs to the methylglyoxal synthase family.

It carries out the reaction dihydroxyacetone phosphate = methylglyoxal + phosphate. Its function is as follows. Catalyzes the formation of methylglyoxal from dihydroxyacetone phosphate. This chain is Methylglyoxal synthase, found in Burkholderia orbicola (strain AU 1054).